A 393-amino-acid chain; its full sequence is MPRIGTPLSPSATRILLCGCGELGKELVIELQRFGVEVIAVDRYANAPAMQVAHRSHVLDMLDGAALRAVIEQERPHYIVPEIEAIATATLVELEREGYTVIPTARAAQLTMNREGIRRLAAEELGLPTSPYRFADTLDECRAAAMALGFPCLVKPVMSSSGKGQSVLRSDADIDAAWEYAQAGGRAGRGRVIVEGFIDFDYEITLLTVRHAGGTSFCEPVGHRQEKGDYQESWQPQPMAPAALAEAKRIALAVTDALGGRGIFGVELFVKGEQVWFCEISPRPHDTGLVTLVSQDLSEFALHARAILGLPIPVIRQLGPAASAVVLVEGESTQVSFGNLAEVLAEPDTALRLFGKPGVSGQRRMGVALARDTSIDAARQKALRAAAAVKIEL.

N(1)-(5-phospho-beta-D-ribosyl)glycinamide contacts are provided by residues 22–23 (EL) and Glu82. Residues Arg114, Lys155, 160-165 (SSGKGQ), 195-198 (EGFI), and Glu203 contribute to the ATP site. Positions 119-308 (RLAAEELGLP…EFALHARAIL (190 aa)) constitute an ATP-grasp domain. Positions 267 and 279 each coordinate Mg(2+). N(1)-(5-phospho-beta-D-ribosyl)glycinamide is bound by residues Asp286, Lys356, and 363–364 (RR).

The protein belongs to the PurK/PurT family. In terms of assembly, homodimer.

It catalyses the reaction N(1)-(5-phospho-beta-D-ribosyl)glycinamide + formate + ATP = N(2)-formyl-N(1)-(5-phospho-beta-D-ribosyl)glycinamide + ADP + phosphate + H(+). It participates in purine metabolism; IMP biosynthesis via de novo pathway; N(2)-formyl-N(1)-(5-phospho-D-ribosyl)glycinamide from N(1)-(5-phospho-D-ribosyl)glycinamide (formate route): step 1/1. In terms of biological role, involved in the de novo purine biosynthesis. Catalyzes the transfer of formate to 5-phospho-ribosyl-glycinamide (GAR), producing 5-phospho-ribosyl-N-formylglycinamide (FGAR). Formate is provided by PurU via hydrolysis of 10-formyl-tetrahydrofolate. The chain is Formate-dependent phosphoribosylglycinamide formyltransferase from Stutzerimonas stutzeri (strain A1501) (Pseudomonas stutzeri).